The primary structure comprises 145 residues: D-aminoacyl-tRNA deacylase (145 aa).

A Gly-cisPro motif, important for rejection of L-amino acids motif is present at residues 137–138 (GP).

The protein belongs to the DTD family. In terms of assembly, homodimer.

It is found in the cytoplasm. It catalyses the reaction glycyl-tRNA(Ala) + H2O = tRNA(Ala) + glycine + H(+). The catalysed reaction is a D-aminoacyl-tRNA + H2O = a tRNA + a D-alpha-amino acid + H(+). An aminoacyl-tRNA editing enzyme that deacylates mischarged D-aminoacyl-tRNAs. Also deacylates mischarged glycyl-tRNA(Ala), protecting cells against glycine mischarging by AlaRS. Acts via tRNA-based rather than protein-based catalysis; rejects L-amino acids rather than detecting D-amino acids in the active site. By recycling D-aminoacyl-tRNA to D-amino acids and free tRNA molecules, this enzyme counteracts the toxicity associated with the formation of D-aminoacyl-tRNA entities in vivo and helps enforce protein L-homochirality. In Legionella pneumophila (strain Paris), this protein is D-aminoacyl-tRNA deacylase.